The sequence spans 458 residues: UDP-N-acetylmuramate--L-alanine ligase (458 aa).

An ATP-binding site is contributed by 118–124; sequence GTHGKTT.

Belongs to the MurCDEF family.

The protein localises to the cytoplasm. The enzyme catalyses UDP-N-acetyl-alpha-D-muramate + L-alanine + ATP = UDP-N-acetyl-alpha-D-muramoyl-L-alanine + ADP + phosphate + H(+). The protein operates within cell wall biogenesis; peptidoglycan biosynthesis. Its function is as follows. Cell wall formation. In Clostridium botulinum (strain Kyoto / Type A2), this protein is UDP-N-acetylmuramate--L-alanine ligase.